Reading from the N-terminus, the 525-residue chain is Lymphocyte activation gene 3 protein (525 aa).

Positions 1 to 22 (MWEAQFLGLLFLQPLWVAPVKP) are cleaved as a signal peptide. Over 23–450 (LQPGAEVPVV…APGALPAGHL (428 aa)) the chain is Extracellular. An Ig-like V-type domain is found at 37–167 (GAPAQLPCSP…LSCRLRLRLG (131 aa)). An interaction with FGL1 region spans residues 37–252 (GAPAQLPCSP…LTYRDGFNVS (216 aa)). A disulfide bond links Cys-44 and Cys-160. The segment at 62–97 (TWQHQPDSGPPAAAPGHPLAPGPHPAAPSSWGPRPR) is disordered. The span at 69–87 (SGPPAAAPGHPLAPGPHPA) shows a compositional bias: pro residues. The Ig-like C2-type 1 domain occupies 168–252 (QASMTASPPG…LTYRDGFNVS (85 aa)). N-linked (GlcNAc...) asparagine glycosylation occurs at Asn-188. Cys-189 and Cys-241 are disulfide-bonded. Residues Asn-250 and Asn-256 are each glycosylated (N-linked (GlcNAc...) asparagine). Ig-like C2-type domains are found at residues 265–343 (PTPL…QQLN) and 348–419 (LAII…QGER). An intrachain disulfide couples Cys-282 to Cys-333. A glycan (N-linked (GlcNAc...) asparagine) is linked at Asn-343. Cys-369 and Cys-412 form a disulfide bridge. A connecting peptide region spans residues 429 to 450 (ELSSPGAQRSGRAPGALPAGHL). The chain crosses the membrane as a helical span at residues 451–471 (LLFLILGVLSLLLLVTGAFGF). Over 472-525 (HLWRRQWRPRRFSALEQGIHPPQAQSKIEELEQEPEPEPEPEPEPEPEPEPEQL) the chain is Cytoplasmic. The interval 487–525 (EQGIHPPQAQSKIEELEQEPEPEPEPEPEPEPEPEPEQL) is disordered. The short motif at 498 to 503 (KIEELE) is the KIEELE motif element. Residues 501 to 524 (ELEQEPEPEPEPEPEPEPEPEPEQ) are 12 X 2 AA tandem repeats of E-X. Over residues 502–525 (LEQEPEPEPEPEPEPEPEPEPEQL) the composition is skewed to acidic residues.

This sequence belongs to the LAG3 family. Interacts with MHC class II (MHC-II); selectively recognizes stable complexes of peptide and MHC-II. Interacts with FGL1 (via the Fibrinogen C-terminal domain). In terms of processing, proteolytically cleaved by ADAM10 and ADAM17 within the connecting peptide region, leading to release of Secreted lymphocyte activation gene 3 protein (sLAG-3). ADAM10 mediates constitutive cleavage, but cleavage increases following T-cell activation, whereas shedding by ADAM17 is induced by TCR signaling in a PRKCQ-dependent manner. In terms of tissue distribution, primarily expressed in activated T-cells and a subset of natural killer (NK) cells.

The protein localises to the cell membrane. It localises to the secreted. Its function is as follows. Lymphocyte activation gene 3 protein: Inhibitory receptor on antigen activated T-cells. Delivers inhibitory signals upon binding to ligands, such as FGL1. FGL1 constitutes a major ligand of LAG3 and is responsible for LAG3 T-cell inhibitory function. Following TCR engagement, LAG3 associates with CD3-TCR in the immunological synapse and directly inhibits T-cell activation. May inhibit antigen-specific T-cell activation in synergy with PDCD1/PD-1, possibly by acting as a coreceptor for PDCD1/PD-1. Negatively regulates the proliferation, activation, effector function and homeostasis of both CD8(+) and CD4(+) T-cells. Also mediates immune tolerance: constitutively expressed on a subset of regulatory T-cells (Tregs) and contributes to their suppressive function. Also acts as a negative regulator of plasmacytoid dendritic cell (pDCs) activation. Binds MHC class II (MHC-II); the precise role of MHC-II-binding is however unclear. May function as a ligand for MHC class II (MHC-II) on antigen-presenting cells (APC), promoting APC activation/maturation and driving Th1 immune response. The sequence is that of Lymphocyte activation gene 3 protein from Homo sapiens (Human).